Consider the following 79-residue polypeptide: Small ribosomal subunit protein bS18 (79 aa).

Belongs to the bacterial ribosomal protein bS18 family. In terms of assembly, part of the 30S ribosomal subunit. Forms a tight heterodimer with protein bS6.

Its function is as follows. Binds as a heterodimer with protein bS6 to the central domain of the 16S rRNA, where it helps stabilize the platform of the 30S subunit. In Streptococcus pyogenes serotype M49 (strain NZ131), this protein is Small ribosomal subunit protein bS18.